Reading from the N-terminus, the 735-residue chain is Translation factor GUF1 homolog, chloroplastic (735 aa).

2 disordered regions span residues 1–38 (MAVP…PSTS) and 106–126 (PENA…GVDN). The transit peptide at 1–47 (MAVPTIPSPACISQSANGSIISTRRSTETNPRQHPSTSYRCAGRVVR) directs the protein to the chloroplast. Positions 11-38 (CISQSANGSIISTRRSTETNPRQHPSTS) are enriched in polar residues. A compositionally biased stretch (basic and acidic residues) spans 106 to 115 (PENAEKDYSK). The region spanning 137-319 (SNIRNFSIIA…AVVKKIPPPK (183 aa)) is the tr-type G domain. Residues 146–153 (AHIDHGKS), 212–216 (DTPGH), and 266–269 (NKID) each bind GTP.

Belongs to the TRAFAC class translation factor GTPase superfamily. Classic translation factor GTPase family. LepA subfamily.

It is found in the plastid. Its subcellular location is the chloroplast. It carries out the reaction GTP + H2O = GDP + phosphate + H(+). In terms of biological role, promotes chloroplast protein synthesis. May act as a fidelity factor of the translation reaction, by catalyzing a one-codon backward translocation of tRNAs on improperly translocated ribosomes. The protein is Translation factor GUF1 homolog, chloroplastic of Physcomitrium patens (Spreading-leaved earth moss).